The chain runs to 243 residues: Ubiquinone/menaquinone biosynthesis C-methyltransferase UbiE (243 aa).

S-adenosyl-L-methionine-binding positions include Thr-69, Asp-90, and 116–117 (DA).

It belongs to the class I-like SAM-binding methyltransferase superfamily. MenG/UbiE family.

It catalyses the reaction a 2-demethylmenaquinol + S-adenosyl-L-methionine = a menaquinol + S-adenosyl-L-homocysteine + H(+). The catalysed reaction is a 2-methoxy-6-(all-trans-polyprenyl)benzene-1,4-diol + S-adenosyl-L-methionine = a 5-methoxy-2-methyl-3-(all-trans-polyprenyl)benzene-1,4-diol + S-adenosyl-L-homocysteine + H(+). It participates in quinol/quinone metabolism; menaquinone biosynthesis; menaquinol from 1,4-dihydroxy-2-naphthoate: step 2/2. The protein operates within cofactor biosynthesis; ubiquinone biosynthesis. Its function is as follows. Methyltransferase required for the conversion of demethylmenaquinol (DMKH2) to menaquinol (MKH2) and the conversion of 2-polyprenyl-6-methoxy-1,4-benzoquinol (DDMQH2) to 2-polyprenyl-3-methyl-6-methoxy-1,4-benzoquinol (DMQH2). This Cupriavidus taiwanensis (strain DSM 17343 / BCRC 17206 / CCUG 44338 / CIP 107171 / LMG 19424 / R1) (Ralstonia taiwanensis (strain LMG 19424)) protein is Ubiquinone/menaquinone biosynthesis C-methyltransferase UbiE.